Reading from the N-terminus, the 291-residue chain is MDLKWLQTFIAAAESESFREAAEHLYLTQPAVSQHMRKLEDELDMRLFLHSGRRVVLTDEGRLFLPYAKEMIHVYQAGKQKVSQWKQGYSRSLTLAVHPYIASYILPRFLPAYIQKHPHVELSTHVAGSDAIKQAVEHNEADIGLSRKDPNTNTLYYQHICEGTLCLAAPFQESRPDAASVLTRYRLLTHDHPSYGDAFLDNIRSHYPYLQMMAVGQTDTAVHMMKAGMGASFLPTYIIKQEEAEKKLMAVSTPAHLELPASQTFMMWKRNSEDIQHFHAMLHDFMQREQV.

Residues 1-58 (MDLKWLQTFIAAAESESFREAAEHLYLTQPAVSQHMRKLEDELDMRLFLHSGRRVVLT) form the HTH lysR-type domain. Residues 18–37 (FREAAEHLYLTQPAVSQHMR) constitute a DNA-binding region (H-T-H motif).

It belongs to the LysR transcriptional regulatory family.

This is an uncharacterized protein from Bacillus subtilis (strain 168).